We begin with the raw amino-acid sequence, 520 residues long: Peptide chain release factor 3 (520 aa).

Residues 8–273 (EIRKTFAIIS…AYVDHAPMPS (266 aa)) enclose the tr-type G domain. Residues 17-24 (SHPDAGKT), 85-89 (DTPGH), and 139-142 (NKLD) each bind GTP.

The protein belongs to the TRAFAC class translation factor GTPase superfamily. Classic translation factor GTPase family. PrfC subfamily.

It localises to the cytoplasm. Its function is as follows. Increases the formation of ribosomal termination complexes and stimulates activities of RF-1 and RF-2. It binds guanine nucleotides and has strong preference for UGA stop codons. It may interact directly with the ribosome. The stimulation of RF-1 and RF-2 is significantly reduced by GTP and GDP, but not by GMP. This is Peptide chain release factor 3 from Macrococcus caseolyticus (strain JCSC5402) (Macrococcoides caseolyticum).